A 748-amino-acid polypeptide reads, in one-letter code: Subtilisin-like protease (748 aa).

The N-terminal stretch at 1-24 (MMKMELRLLVSLIFILCSISMLAA) is a signal peptide. The Inhibitor I9 domain maps to 37-115 (TYIVHVKKSE…ARPERTLELH (79 aa)). The region spanning 122-600 (FLGLKQGQGL…AGHVNPVKAN (479 aa)) is the Peptidase S8 domain. Residues aspartate 147 and histidine 206 each act as charge relay system in the active site. In terms of domain architecture, PA spans 365–454 (PLVYPGSFGY…VEVSYAAGLT (90 aa)). Residues asparagine 376, asparagine 380, and asparagine 405 are each glycosylated (N-linked (GlcNAc...) asparagine). Catalysis depends on serine 533, which acts as the Charge relay system. 2 N-linked (GlcNAc...) asparagine glycosylation sites follow: asparagine 675 and asparagine 722.

This sequence belongs to the peptidase S8 family.

The protein resides in the secreted. It localises to the extracellular space. The protein localises to the apoplast. Functionally, required for arbuscular mycorrhiza (AM) development during AM symbiosis with AM fungi (e.g. Glomeromycota intraradices). The sequence is that of Subtilisin-like protease from Medicago truncatula (Barrel medic).